Here is a 217-residue protein sequence, read N- to C-terminus: Uracil-DNA glycosylase (217 aa).

Asp-62 acts as the Proton acceptor in catalysis.

This sequence belongs to the uracil-DNA glycosylase (UDG) superfamily. UNG family.

It is found in the cytoplasm. It catalyses the reaction Hydrolyzes single-stranded DNA or mismatched double-stranded DNA and polynucleotides, releasing free uracil.. In terms of biological role, excises uracil residues from the DNA which can arise as a result of misincorporation of dUMP residues by DNA polymerase or due to deamination of cytosine. This Streptococcus gordonii (strain Challis / ATCC 35105 / BCRC 15272 / CH1 / DL1 / V288) protein is Uracil-DNA glycosylase.